Consider the following 132-residue polypeptide: Small ribosomal subunit protein uS8 (132 aa).

Belongs to the universal ribosomal protein uS8 family. As to quaternary structure, part of the 30S ribosomal subunit. Contacts proteins S5 and S12.

Its function is as follows. One of the primary rRNA binding proteins, it binds directly to 16S rRNA central domain where it helps coordinate assembly of the platform of the 30S subunit. The sequence is that of Small ribosomal subunit protein uS8 from Geobacter metallireducens (strain ATCC 53774 / DSM 7210 / GS-15).